The chain runs to 276 residues: ATP synthase subunit a (276 aa).

Helical transmembrane passes span 27–47 (ITMLAGLSVLNLFPLAALEVG), 61–81 (GQTFATSWFVILLLVIASLAA), 120–140 (LPFIGTLFLFIFVSNWSGALL), 159–179 (DINTTVALALLTSLAYFYAGL), 225–245 (LVVAVLVLLVPLLVPLPLMAL), and 246–266 (GLFTSAIQALVFATLAGAYIH).

The protein belongs to the ATPase A chain family. F-type ATPases have 2 components, CF(1) - the catalytic core - and CF(0) - the membrane proton channel. CF(1) has five subunits: alpha(3), beta(3), gamma(1), delta(1), epsilon(1). CF(0) has four main subunits: a, b, b' and c.

The protein localises to the cellular thylakoid membrane. In terms of biological role, key component of the proton channel; it plays a direct role in the translocation of protons across the membrane. The polypeptide is ATP synthase subunit a (Synechocystis sp. (strain ATCC 27184 / PCC 6803 / Kazusa)).